A 200-amino-acid polypeptide reads, in one-letter code: Small ribosomal subunit protein uS4 (200 aa).

The S4 RNA-binding domain occupies 92–155 (SRLDAVVYQL…QKLNIIAESV (64 aa)).

It belongs to the universal ribosomal protein uS4 family. In terms of assembly, part of the 30S ribosomal subunit. Contacts protein S5. The interaction surface between S4 and S5 is involved in control of translational fidelity.

Its function is as follows. One of the primary rRNA binding proteins, it binds directly to 16S rRNA where it nucleates assembly of the body of the 30S subunit. Functionally, with S5 and S12 plays an important role in translational accuracy. The chain is Small ribosomal subunit protein uS4 from Macrococcus caseolyticus (strain JCSC5402) (Macrococcoides caseolyticum).